The primary structure comprises 239 residues: Purine nucleoside phosphorylase DeoD-type (239 aa).

Histidine 5 contacts a purine D-ribonucleoside. Phosphate is bound by residues glycine 21, arginine 25, arginine 44, and 89–92 (RVGS). Residues 180-182 (EME) and 204-205 (SD) contribute to the a purine D-ribonucleoside site. The Proton donor role is filled by aspartate 205.

Belongs to the PNP/UDP phosphorylase family. In terms of assembly, homohexamer; trimer of homodimers.

The enzyme catalyses a purine D-ribonucleoside + phosphate = a purine nucleobase + alpha-D-ribose 1-phosphate. It catalyses the reaction a purine 2'-deoxy-D-ribonucleoside + phosphate = a purine nucleobase + 2-deoxy-alpha-D-ribose 1-phosphate. Its function is as follows. Catalyzes the reversible phosphorolytic breakdown of the N-glycosidic bond in the beta-(deoxy)ribonucleoside molecules, with the formation of the corresponding free purine bases and pentose-1-phosphate. In Klebsiella pneumoniae, this protein is Purine nucleoside phosphorylase DeoD-type.